The primary structure comprises 397 residues: Digeranylgeranylglycerophospholipid reductase 3 (397 aa).

FAD is bound by residues alanine 16, aspartate 35, cysteine 46, alanine 47, glycine 49, arginine 102, alanine 126, aspartate 283, glycine 295, and isoleucine 296. Lysine 338 lines the a 2,3-bis-O-(geranylgeranyl)-sn-glycerol 1-phospholipid pocket.

Belongs to the geranylgeranyl reductase family. DGGGPL reductase subfamily. Requires FAD as cofactor.

It catalyses the reaction a 2,3-bis-O-phytanyl-sn-glycerol 1-phospholipid + 8 A = a 2,3-bis-O-(geranylgeranyl)-sn-glycerol 1-phospholipid + 8 AH2. The enzyme catalyses 2,3-bis-O-(phytanyl)-sn-glycerol 1-phosphate + 8 A = 2,3-bis-O-(geranylgeranyl)-sn-glycerol 1-phosphate + 8 AH2. The catalysed reaction is CDP-2,3-bis-O-(geranylgeranyl)-sn-glycerol + 8 AH2 = CDP-2,3-bis-O-(phytanyl)-sn-glycerol + 8 A. It carries out the reaction archaetidylserine + 8 AH2 = 2,3-bis-O-phytanyl-sn-glycero-3-phospho-L-serine + 8 A. The protein operates within membrane lipid metabolism; glycerophospholipid metabolism. Its function is as follows. Is involved in the reduction of 2,3-digeranylgeranylglycerophospholipids (unsaturated archaeols) into 2,3-diphytanylglycerophospholipids (saturated archaeols) in the biosynthesis of archaeal membrane lipids. Catalyzes the formation of archaetidic acid (2,3-di-O-phytanyl-sn-glyceryl phosphate) from 2,3-di-O-geranylgeranylglyceryl phosphate (DGGGP) via the hydrogenation of each double bond of the isoprenoid chains. Is also probably able to reduce double bonds of geranyl groups in CDP-2,3-bis-O-(geranylgeranyl)-sn-glycerol and archaetidylserine, thus acting at various stages in the biosynthesis of archaeal membrane lipids. This chain is Digeranylgeranylglycerophospholipid reductase 3, found in Methanosphaera stadtmanae (strain ATCC 43021 / DSM 3091 / JCM 11832 / MCB-3).